A 207-amino-acid chain; its full sequence is Large ribosomal subunit protein bL25 (207 aa).

This sequence belongs to the bacterial ribosomal protein bL25 family. CTC subfamily. In terms of assembly, part of the 50S ribosomal subunit; part of the 5S rRNA/L5/L18/L25 subcomplex. Contacts the 5S rRNA. Binds to the 5S rRNA independently of L5 and L18.

In terms of biological role, this is one of the proteins that binds to the 5S RNA in the ribosome where it forms part of the central protuberance. The chain is Large ribosomal subunit protein bL25 from Azorhizobium caulinodans (strain ATCC 43989 / DSM 5975 / JCM 20966 / LMG 6465 / NBRC 14845 / NCIMB 13405 / ORS 571).